A 155-amino-acid chain; its full sequence is Endoribonuclease YbeY (155 aa).

Zn(2+) contacts are provided by His-118, His-122, and His-128.

Belongs to the endoribonuclease YbeY family. Requires Zn(2+) as cofactor.

It is found in the cytoplasm. Functionally, single strand-specific metallo-endoribonuclease involved in late-stage 70S ribosome quality control and in maturation of the 3' terminus of the 16S rRNA. This Bordetella petrii (strain ATCC BAA-461 / DSM 12804 / CCUG 43448) protein is Endoribonuclease YbeY.